The primary structure comprises 848 residues: Adenylate cyclase (848 aa).

Positions methionine 1–leucine 535 are catalytic. The tract at residues lysine 541–histidine 848 is regulatory.

This sequence belongs to the adenylyl cyclase class-1 family.

The protein localises to the cytoplasm. The catalysed reaction is ATP = 3',5'-cyclic AMP + diphosphate. Its activity is regulated as follows. The regulatory domain is involved in the regulation of cyclase activity by the carbon source. The polypeptide is Adenylate cyclase (cya) (Yersinia intermedia).